Here is a 71-residue protein sequence, read N- to C-terminus: Small ribosomal subunit protein bS21 (71 aa).

It belongs to the bacterial ribosomal protein bS21 family.

The polypeptide is Small ribosomal subunit protein bS21 (Hydrogenovibrio crunogenus (strain DSM 25203 / XCL-2) (Thiomicrospira crunogena)).